A 288-amino-acid polypeptide reads, in one-letter code: Ankyrin repeat and SOCS box protein 8 (288 aa).

Serine 17 carries the phosphoserine modification. 4 ANK repeats span residues glycine 52 to alanine 81, tyrosine 85 to alanine 113, asparagine 117 to alanine 146, and asparagine 150 to valine 179. Residues glutamine 235 to glutamate 288 form the SOCS box domain.

It belongs to the ankyrin SOCS box (ASB) family. As to quaternary structure, interacts with TBK1; this interaction promotes TBK1 proteasomal degradation. Phosphorylated by TBK1. Highest level of expression in skeletal muscle. Also expressed in heart, brain, placenta, liver, kidney and pancreas.

The protein localises to the cytoplasm. It participates in protein modification; protein ubiquitination. Functionally, may be a substrate-recognition component of a SCF-like ECS (Elongin-Cullin-SOCS-box protein) E3 ubiquitin-protein ligase complex which mediates the ubiquitination and subsequent proteasomal degradation of target proteins. Inhibits IFN-beta production through the IRF3 signaling pathway by targeting TBK1 via 'Lys-48'-linked ubiquitination, leading to its proteasomal degradation. The polypeptide is Ankyrin repeat and SOCS box protein 8 (ASB8) (Homo sapiens (Human)).